The chain runs to 591 residues: Dolichyl-phosphooligosaccharide-protein glycotransferase 1 (591 aa).

The Cytoplasmic portion of the chain corresponds to 1–5 (MDRKV). Residues 6–26 (LMLAVILFALAVRFQNFGEIF) traverse the membrane as a helical segment. Residues 27–67 (DSGIYYTGYDSYYHMRLVEVMVKESFRPDYDYYINYPFGLK) lie on the Extracellular side of the membrane. The short motif at 34–36 (GYD) is the DXD motif 1 element. Position 36 (Asp36) interacts with Mn(2+). A helical transmembrane segment spans residues 68–88 (ITWPPLFDYILAFPGMLFGFH). Residues 89-91 (SSE) are Cytoplasmic-facing. The chain crosses the membrane as a helical span at residues 92 to 112 (IFAVFLPVILGVLSVVLICLT). The Extracellular segment spans residues 113-121 (ALQIVNNQT). A helical transmembrane segment spans residues 122–142 (FALISAFIYAAAPVAVWKTVL). Topologically, residues 143-147 (GQADH) are cytoplasmic. Asp146 is a binding site for Mn(2+). The short motif at 146–148 (DHH) is the DXD motif 2 element. His147 serves as a coordination point for a glycophospholipid. His148 is a Mn(2+) binding site. The chain crosses the membrane as a helical span at residues 148-168 (HALVIFLFLLSAYLLLKDGVW). A topological domain (extracellular) is located at residue Lys169. Residues 170 to 190 (ILAGLPMLFMALAWLGSPIYG) form a helical membrane-spanning segment. The Cytoplasmic segment spans residues 191-219 (ALLAFSALVHFDRKALRLVAASYLIPAIS). Residues 220-240 (FVLYPPVGISFFGLAAFLFVG) form a helical membrane-spanning segment. The Extracellular segment spans residues 241–252 (SVVKGYEDRFRN). The helical transmembrane segment at 253–273 (ATIYYIALSLATVLIIYFIPL) threads the bilayer. The Cytoplasmic portion of the chain corresponds to 274–275 (PH). Residues 276-296 (FEFVKGGINYIFGANIYLPTI) traverse the membrane as a helical segment. Residues 295–298 (TISE) carry the TIXE motif motif. The Extracellular segment spans residues 297-303 (SEARSLQ). A helical transmembrane segment spans residues 304-324 (IFEIISASGYIYFIFALISVL). Topologically, residues 325 to 327 (FFR) are cytoplasmic. Residues 328–344 (NRFVLSMFFLSFILALM) traverse the membrane as a helical segment. The Extracellular portion of the chain corresponds to 345 to 347 (QLR). Residue Arg347 coordinates a glycophospholipid. A helical transmembrane segment spans residues 348-368 (FTEVLVVPSALLSAYLVSLVL). Topologically, residues 369-408 (ERLEYPVFEKADEEEKSRRRKRKDRKVKQKNAEVEWKDHA) are cytoplasmic. The chain crosses the membrane as a helical span at residues 409–429 (VVAAFLVILAIPCIVVAVVPF). Topologically, residues 430 to 591 (DLTEDWKEAL…DVKIFEVVGS (162 aa)) are extracellular. The interacts with target acceptor peptide in protein substrate stretch occupies residues 465–467 (WWD). The WWDYG motif motif lies at 465-469 (WWDYG). The DKi motif motif lies at 521-535 (EITMKDANNTKFPAI).

This sequence belongs to the STT3 family. Mn(2+) is required as a cofactor. Requires Mg(2+) as cofactor. It depends on Zn(2+) as a cofactor.

The protein resides in the cell membrane. It carries out the reaction an archaeal dolichyl phosphooligosaccharide + [protein]-L-asparagine = an archaeal dolichyl phosphate + a glycoprotein with the oligosaccharide chain attached by N-beta-D-glycosyl linkage to a protein L-asparagine.. The protein operates within protein modification; protein glycosylation. Oligosaccharyl transferase (OST) that catalyzes the initial transfer of a defined glycan (a GalNAc-linked heptasaccharide composed of 4 Hex, 3 dHex and a sulfate for A.fulgidus AglB-S) from the lipid carrier dolichol-monophosphate to an asparagine residue within an Asn-X-Ser/Thr consensus motif in nascent polypeptide chains, the first step in protein N-glycosylation. In Archaeoglobus fulgidus (strain ATCC 49558 / DSM 4304 / JCM 9628 / NBRC 100126 / VC-16), this protein is Dolichyl-phosphooligosaccharide-protein glycotransferase 1 (aglB1).